A 549-amino-acid polypeptide reads, in one-letter code: Glucose-6-phosphate isomerase (549 aa).

The active-site Proton donor is the Glu-355. Catalysis depends on residues His-386 and Lys-514.

It belongs to the GPI family.

The protein localises to the cytoplasm. The catalysed reaction is alpha-D-glucose 6-phosphate = beta-D-fructose 6-phosphate. The protein operates within carbohydrate biosynthesis; gluconeogenesis. Its pathway is carbohydrate degradation; glycolysis; D-glyceraldehyde 3-phosphate and glycerone phosphate from D-glucose: step 2/4. In terms of biological role, catalyzes the reversible isomerization of glucose-6-phosphate to fructose-6-phosphate. This Aeromonas salmonicida (strain A449) protein is Glucose-6-phosphate isomerase.